Consider the following 198-residue polypeptide: MNREEQLGVLESLLFAAGDAGLSTEQLTEVMEITHIEALNLLELLSERYNESADRGLILLELAGTFQLATKKAHAEFLRKLVEVPSNTVLSQASLETLAIIAYRQPVTRMEVDEVRGVQTDGPIRTLVAKGLVTDKGRVDGAGRAKLYVTTSEFLDAFGLNSLEDLPKLADPATDEPDQNEMDLFFDRFNQSKEQEEE.

Residues 168 to 198 (KLADPATDEPDQNEMDLFFDRFNQSKEQEEE) form a disordered region.

It belongs to the ScpB family. As to quaternary structure, homodimer. Homodimerization may be required to stabilize the binding of ScpA to the Smc head domains. Component of a cohesin-like complex composed of ScpA, ScpB and the Smc homodimer, in which ScpA and ScpB bind to the head domain of Smc. The presence of the three proteins is required for the association of the complex with DNA.

It is found in the cytoplasm. In terms of biological role, participates in chromosomal partition during cell division. May act via the formation of a condensin-like complex containing Smc and ScpA that pull DNA away from mid-cell into both cell halves. This chain is Segregation and condensation protein B, found in Listeria monocytogenes serovar 1/2a (strain ATCC BAA-679 / EGD-e).